Consider the following 276-residue polypeptide: Malectin-B (276 aa).

The first 26 residues, 1–26 (MLSIRTVLGPLAAILLTVIGPFGAHG), serve as a signal peptide directing secretion. The Lumenal segment spans residues 27-253 (SGLADKVMWA…TPNPYASDNS (227 aa)). A carbohydrate contacts are provided by Y67, Y89, Y116, F117, and D186. The segment at 202–249 (DVPQLQPHPGLEKKEEEEEEEEEEGSPSKKQSNKNRVQSGPRTPNPYA) is disordered. Residues 216 to 226 (EEEEEEEEEEG) are compositionally biased toward acidic residues. A compositionally biased stretch (polar residues) spans 229–249 (SKKQSNKNRVQSGPRTPNPYA). The N-linked (GlcNAc...) asparagine glycan is linked to N252. Residues 254–274 (SLMFPILVAFGVFIPTLFCLC) traverse the membrane as a helical segment. Residues 275 to 276 (RL) are Cytoplasmic-facing.

Belongs to the malectin family.

It localises to the endoplasmic reticulum membrane. In terms of biological role, carbohydrate-binding protein with a strong ligand preference for Glc2-N-glycan. May play a role in the early steps of protein N-glycosylation. Can bind di- or higher oligomers but not monomers of glucose, including maltose, maltotriose, maltotetraose, maltoheptaose, nigerose, kojibose, cellobiose and isomaltose, although based on their subcellular locations, these are unlikely to all be physiological ligands. The protein is Malectin-B of Xenopus laevis (African clawed frog).